The following is a 119-amino-acid chain: Holo-[acyl-carrier-protein] synthase (119 aa).

The Mg(2+) site is built by D7 and E56.

It belongs to the P-Pant transferase superfamily. AcpS family. Requires Mg(2+) as cofactor.

Its subcellular location is the cytoplasm. The catalysed reaction is apo-[ACP] + CoA = holo-[ACP] + adenosine 3',5'-bisphosphate + H(+). Its function is as follows. Transfers the 4'-phosphopantetheine moiety from coenzyme A to a Ser of acyl-carrier-protein. The chain is Holo-[acyl-carrier-protein] synthase from Chlamydia trachomatis serovar D (strain ATCC VR-885 / DSM 19411 / UW-3/Cx).